We begin with the raw amino-acid sequence, 288 residues long: Small ribosomal subunit protein uS2 (288 aa).

The disordered stretch occupies residues 267 to 288 (EEVEEVEEEFIPSEIEDEDEKF).

The protein belongs to the universal ribosomal protein uS2 family.

The polypeptide is Small ribosomal subunit protein uS2 (Petrotoga mobilis (strain DSM 10674 / SJ95)).